Here is a 226-residue protein sequence, read N- to C-terminus: UPF0758 protein CHY_0341 (226 aa).

In terms of domain architecture, MPN spans 104–226 (NFLNPDDVYN…YISMKAERLF (123 aa)). Zn(2+) is bound by residues His-175, His-177, and Asp-188. The JAMM motif signature appears at 175-188 (HNHPSGDPTPSKED).

It belongs to the UPF0758 family.

The protein is UPF0758 protein CHY_0341 of Carboxydothermus hydrogenoformans (strain ATCC BAA-161 / DSM 6008 / Z-2901).